The following is a 455-amino-acid chain: Glutamate-1-semialdehyde 2,1-aminomutase (455 aa).

K286 carries the post-translational modification N6-(pyridoxal phosphate)lysine.

It belongs to the class-III pyridoxal-phosphate-dependent aminotransferase family. HemL subfamily. As to quaternary structure, homodimer. The cofactor is pyridoxal 5'-phosphate.

The protein localises to the cytoplasm. The enzyme catalyses (S)-4-amino-5-oxopentanoate = 5-aminolevulinate. The protein operates within porphyrin-containing compound metabolism; protoporphyrin-IX biosynthesis; 5-aminolevulinate from L-glutamyl-tRNA(Glu): step 2/2. This is Glutamate-1-semialdehyde 2,1-aminomutase from Clavibacter michiganensis subsp. michiganensis (strain NCPPB 382).